The sequence spans 238 residues: MRPSNRAPDQLREVEIIRHYTKHAEGSVLVKFGDTHVLCTASVEDKVPPFLRGRNQGWTTAEYGMLPRSTGSRMDREAARGKQSGRTQEIQRLIGRSLRAVIDLGKLGERTIHLDCDVIQADGGTRTASITGAYVALHDAVGFMLANDMIQESPLRDAVAAISVGVYQGTPVLDLDYIEDSACDTDMNVVMTGSGGFVEIQGTAEGEPFQRAAMNRMLELAESGIRTLLLKQKEALGL.

The tract at residues 64–86 is disordered; sequence GMLPRSTGSRMDREAARGKQSGR. Phosphate-binding positions include Arg86 and 124–126; that span reads GTR.

It belongs to the RNase PH family. As to quaternary structure, homohexameric ring arranged as a trimer of dimers.

It catalyses the reaction tRNA(n+1) + phosphate = tRNA(n) + a ribonucleoside 5'-diphosphate. Phosphorolytic 3'-5' exoribonuclease that plays an important role in tRNA 3'-end maturation. Removes nucleotide residues following the 3'-CCA terminus of tRNAs; can also add nucleotides to the ends of RNA molecules by using nucleoside diphosphates as substrates, but this may not be physiologically important. Probably plays a role in initiation of 16S rRNA degradation (leading to ribosome degradation) during starvation. This chain is Ribonuclease PH, found in Methylobacillus flagellatus (strain ATCC 51484 / DSM 6875 / VKM B-1610 / KT).